A 384-amino-acid chain; its full sequence is Spermatogenesis-associated protein 32 (384 aa).

Positions 23 to 60 (RDDLSQHQIQEEQELEADMLEQKPQLQVDLDLDPDPDP) are disordered. Residues serine 167 and serine 170 each carry the phosphoserine modification. Disordered regions lie at residues 211–232 (DAHS…SSDL), 284–310 (VEER…LKSW), and 340–366 (LLQP…EKEN). A compositionally biased stretch (low complexity) spans 214–231 (SAPPTTSSQAPSPLLSSD). Basic and acidic residues predominate over residues 353–366 (SKEDSVPPGKEKEN).

In terms of assembly, interacts with syntaxin-1 and ACTB. Detected in testis, and on the acrosomal cap of spermatids.

This chain is Spermatogenesis-associated protein 32 (SPATA32), found in Homo sapiens (Human).